The primary structure comprises 246 residues: MAVQISKKRKFVADGIFKAELNEFLTRELAEDGYSGVEVRVTPTRTEIIILATRTQNVLGEKGRRIRELTAVVQKRFGFPEGSVELYAEKVATRGLCAIAQAESLRYKLLGGLAVRRACYGVLRFIMESGAKGCEVVVSGKLRGQRAKSMKFVDGLMIHSGDPVNYYVDTAVRHVLLRQGVLGIKVKIMLPWDPSGKIGPKKPLPDHVSIVEPKDEIVPTTPISEQKAAKPDQPQPPAMPQPVATA.

A KH type-2 domain is found at 21-92 (LNEFLTRELA…SVELYAEKVA (72 aa)). The tract at residues 215 to 246 (DEIVPTTPISEQKAAKPDQPQPPAMPQPVATA) is disordered.

This sequence belongs to the universal ribosomal protein uS3 family.

Its subcellular location is the cytoplasm. The protein localises to the nucleus. It localises to the nucleolus. It is found in the mitochondrion inner membrane. The protein resides in the cytoskeleton. Its subcellular location is the spindle. It catalyses the reaction 2'-deoxyribonucleotide-(2'-deoxyribose 5'-phosphate)-2'-deoxyribonucleotide-DNA = a 3'-end 2'-deoxyribonucleotide-(2,3-dehydro-2,3-deoxyribose 5'-phosphate)-DNA + a 5'-end 5'-phospho-2'-deoxyribonucleoside-DNA + H(+). Component of the small ribosomal subunit. The ribosome is a large ribonucleoprotein complex responsible for the synthesis of proteins in the cell. Has endonuclease activity and plays a role in repair of damaged DNA. Also involved in other processes including regulation of transcription, translation of its cognate mRNA, spindle formation and chromosome movement during mitosis, and apoptosis. In Xenopus laevis (African clawed frog), this protein is Small ribosomal subunit protein uS3A (rps3-a).